The chain runs to 112 residues: Truncated ankyrin repeat protein B25 (112 aa).

It belongs to the orthopoxviruses B25 protein family.

The sequence is that of Truncated ankyrin repeat protein B25 from Bos taurus (Bovine).